We begin with the raw amino-acid sequence, 160 residues long: Protein BOLA1, chloroplastic (160 aa).

A chloroplast-targeting transit peptide spans methionine 1–valine 50. A compositionally biased stretch (polar residues) spans glutamate 39–aspartate 61. The segment at glutamate 39–glutamate 66 is disordered.

This sequence belongs to the bolA/yrbA family. As to quaternary structure, interacts in vitro with GRXS14, GRXS15, GRXS16 and GRXS17, but not with GRXC5. Interacts in vivo only with GRXS14 and GRXS16.

The protein localises to the plastid. Its subcellular location is the chloroplast. Functionally, may act either alone or in interaction with glutaredoxin as a redox-regulated transcriptional regulator, or as a factor regulating Fe-S cluster biogenesis. The glutaredoxin-BOLA1 heterodimers bind a labile, oxygen sensitive iron-sulfur cluster. The sequence is that of Protein BOLA1, chloroplastic from Arabidopsis thaliana (Mouse-ear cress).